Reading from the N-terminus, the 1207-residue chain is DNA-directed RNA polymerase subunit beta' (1207 aa).

Residues cysteine 60, cysteine 62, cysteine 75, and cysteine 78 each contribute to the Zn(2+) site. 3 residues coordinate Mg(2+): aspartate 450, aspartate 452, and aspartate 454. Zn(2+) is bound by residues cysteine 818, cysteine 892, cysteine 899, and cysteine 902.

Belongs to the RNA polymerase beta' chain family. The RNAP catalytic core consists of 2 alpha, 1 beta, 1 beta' and 1 omega subunit. When a sigma factor is associated with the core the holoenzyme is formed, which can initiate transcription. Requires Mg(2+) as cofactor. Zn(2+) serves as cofactor.

The catalysed reaction is RNA(n) + a ribonucleoside 5'-triphosphate = RNA(n+1) + diphosphate. Functionally, DNA-dependent RNA polymerase catalyzes the transcription of DNA into RNA using the four ribonucleoside triphosphates as substrates. The sequence is that of DNA-directed RNA polymerase subunit beta' from Lactococcus lactis subsp. cremoris (strain SK11).